A 109-amino-acid chain; its full sequence is uncharacterized protein (109 aa).

Belongs to the archaeal ATPase family.

This is an uncharacterized protein from Methanocaldococcus jannaschii (strain ATCC 43067 / DSM 2661 / JAL-1 / JCM 10045 / NBRC 100440) (Methanococcus jannaschii).